A 160-amino-acid polypeptide reads, in one-letter code: Non-secretory ribonuclease (160 aa).

An N-terminal signal peptide occupies residues Met1 to Ala27. Residue Trp34 is glycosylated (C-linked (Man) tryptophan). His42 serves as the catalytic Proton acceptor. N-linked (GlcNAc...) asparagine glycosylation is present at Asn44. 4 disulfides stabilise this stretch: Cys50/Cys110, Cys64/Cys122, Cys82/Cys137, and Cys89/Cys98. Residue Tyr60 is modified to 3'-nitrotyrosine. Lys65–Thr69 is a binding site for substrate. N-linked (GlcNAc...) asparagine glycosylation is found at Asn92, Asn111, and Asn138. His155 functions as the Proton donor in the catalytic mechanism.

This sequence belongs to the pancreatic ribonuclease family. Interacts with and forms a tight 1:1 complex with RNH1. Dimerization of two such complexes may occur.

Its subcellular location is the lysosome. The protein resides in the cytoplasmic granule. It catalyses the reaction an [RNA] containing cytidine + H2O = an [RNA]-3'-cytidine-3'-phosphate + a 5'-hydroxy-ribonucleotide-3'-[RNA].. The enzyme catalyses an [RNA] containing uridine + H2O = an [RNA]-3'-uridine-3'-phosphate + a 5'-hydroxy-ribonucleotide-3'-[RNA].. In terms of biological role, this is a non-secretory ribonuclease. It is a pyrimidine specific nuclease with a slight preference for U. Cytotoxin and helminthotoxin. Possesses a wide variety of biological activities. The sequence is that of Non-secretory ribonuclease (RNASE2) from Macaca nemestrina (Pig-tailed macaque).